The sequence spans 360 residues: UDP-N-acetylglucosamine--N-acetylmuramyl-(pentapeptide) pyrophosphoryl-undecaprenol N-acetylglucosamine transferase (360 aa).

UDP-N-acetyl-alpha-D-glucosamine-binding positions include 17–19 (TAG), Asn-130, Arg-166, Ser-200, Ile-247, and Gln-291.

The protein belongs to the glycosyltransferase 28 family. MurG subfamily.

It is found in the cell membrane. The catalysed reaction is di-trans,octa-cis-undecaprenyl diphospho-N-acetyl-alpha-D-muramoyl-L-alanyl-D-glutamyl-meso-2,6-diaminopimeloyl-D-alanyl-D-alanine + UDP-N-acetyl-alpha-D-glucosamine = di-trans,octa-cis-undecaprenyl diphospho-[N-acetyl-alpha-D-glucosaminyl-(1-&gt;4)]-N-acetyl-alpha-D-muramoyl-L-alanyl-D-glutamyl-meso-2,6-diaminopimeloyl-D-alanyl-D-alanine + UDP + H(+). The protein operates within cell wall biogenesis; peptidoglycan biosynthesis. Functionally, cell wall formation. Catalyzes the transfer of a GlcNAc subunit on undecaprenyl-pyrophosphoryl-MurNAc-pentapeptide (lipid intermediate I) to form undecaprenyl-pyrophosphoryl-MurNAc-(pentapeptide)GlcNAc (lipid intermediate II). The chain is UDP-N-acetylglucosamine--N-acetylmuramyl-(pentapeptide) pyrophosphoryl-undecaprenol N-acetylglucosamine transferase from Corynebacterium efficiens (strain DSM 44549 / YS-314 / AJ 12310 / JCM 11189 / NBRC 100395).